A 569-amino-acid polypeptide reads, in one-letter code: Probable santalene synthase (569 aa).

Positions 284, 321, 325, 460, and 463 each coordinate (2E)-geranyl diphosphate. 2 residues coordinate Mg(2+): D321 and D325. Residues D321–D325 carry the DDXXD motif motif. Positions 463, 467, and 471 each coordinate Mg(2+).

Belongs to the terpene synthase family. Tpsb subfamily. It depends on Mg(2+) as a cofactor. Requires Mn(2+) as cofactor.

In terms of biological role, catalyzes the formation of santalene. The polypeptide is Probable santalene synthase (SSY) (Santalum murrayanum (Bitter quandong)).